Here is a 1578-residue protein sequence, read N- to C-terminus: Chitinase ChiA (1578 aa).

The signal sequence occupies residues 1–19 (MKHYYRLLFLLLFPLLASA). The region spanning 25 to 466 (KKVVGYYAQW…NQVDTSFGSV (442 aa)) is the GH18 1 domain. The interval 26-446 (KVVGYYAQWS…GGMIWELSQD (421 aa)) is GH18N. Residues 92–93 (DA) and 119–122 (GGWT) contribute to the chitin site. Residue E162 is the Proton donor of the active site. Chitin is bound by residues Y163, 249 to 252 (FGYD), and W441. The CNA-B domain maps to 485–536 (TDVTVELRNASNAVIQTVVSANGNFAFNNLTSGQNYSLTALKATYTFTPVTL). The interval 1142–1462 (KIILGYAHSW…GLMTWSVNWD (321 aa)) is GH18C. The 342-residue stretch at 1142–1483 (KIILGYAHSW…KAYAAYFASQ (342 aa)) folds into the GH18 2 domain. Residue E1264 is the Proton donor of the active site. The segment at 1473 to 1578 (SKAYAAYFAS…KSFKVMNFLN (106 aa)) is CTD.

This sequence belongs to the glycosyl hydrolase 18 family. Chitinase class II subfamily.

Its subcellular location is the secreted. The enzyme catalyses Random endo-hydrolysis of N-acetyl-beta-D-glucosaminide (1-&gt;4)-beta-linkages in chitin and chitodextrins.. Functionally, major extracellular chitinase, which is essential for chitin utilization. The sequence is that of Chitinase ChiA (chiA) from Flavobacterium johnsoniae (strain ATCC 17061 / DSM 2064 / JCM 8514 / BCRC 14874 / CCUG 350202 / NBRC 14942 / NCIMB 11054 / UW101) (Cytophaga johnsonae).